The chain runs to 379 residues: Queuine tRNA-ribosyltransferase (379 aa).

Catalysis depends on Asp94, which acts as the Proton acceptor. Substrate is bound by residues 94 to 98 (DSGGF), Asp148, Gln191, and Gly218. The RNA binding stretch occupies residues 249-255 (GVGSPDA). The active-site Nucleophile is Asp268. Residues 273 to 277 (TRIAR) are RNA binding; important for wobble base 34 recognition. Zn(2+) is bound by residues Cys306, Cys308, Cys311, and His337.

Belongs to the queuine tRNA-ribosyltransferase family. Homodimer. Within each dimer, one monomer is responsible for RNA recognition and catalysis, while the other monomer binds to the replacement base PreQ1. Zn(2+) serves as cofactor.

It catalyses the reaction 7-aminomethyl-7-carbaguanine + guanosine(34) in tRNA = 7-aminomethyl-7-carbaguanosine(34) in tRNA + guanine. Its pathway is tRNA modification; tRNA-queuosine biosynthesis. In terms of biological role, catalyzes the base-exchange of a guanine (G) residue with the queuine precursor 7-aminomethyl-7-deazaguanine (PreQ1) at position 34 (anticodon wobble position) in tRNAs with GU(N) anticodons (tRNA-Asp, -Asn, -His and -Tyr). Catalysis occurs through a double-displacement mechanism. The nucleophile active site attacks the C1' of nucleotide 34 to detach the guanine base from the RNA, forming a covalent enzyme-RNA intermediate. The proton acceptor active site deprotonates the incoming PreQ1, allowing a nucleophilic attack on the C1' of the ribose to form the product. After dissociation, two additional enzymatic reactions on the tRNA convert PreQ1 to queuine (Q), resulting in the hypermodified nucleoside queuosine (7-(((4,5-cis-dihydroxy-2-cyclopenten-1-yl)amino)methyl)-7-deazaguanosine). This Staphylococcus epidermidis (strain ATCC 35984 / DSM 28319 / BCRC 17069 / CCUG 31568 / BM 3577 / RP62A) protein is Queuine tRNA-ribosyltransferase.